A 259-amino-acid polypeptide reads, in one-letter code: NADPH-dependent reductase BacG (259 aa).

NADP(+) contacts are provided by residues 12 to 15, 34 to 36, 62 to 63, isoleucine 90, lysine 113, and 185 to 191; these read SQGI, SRN, DM, and GFIATDR.

This sequence belongs to the short-chain dehydrogenases/reductases (SDR) family. In terms of assembly, homodimer.

The protein localises to the cytoplasm. It participates in antibiotic biosynthesis; bacilysin biosynthesis. In terms of biological role, along with the bacABCDEF operon, BacG is involved in the biosynthesis of the nonribosomally synthesized dipeptide antibiotic bacilysin, composed of L-alanine and L-anticapsin. Bacilysin is an irreversible inactivator of the glutaminase domain of glucosamine synthetase. BacG catalyzes the stereoselective reduction of exocyclic-delta(3),delta(5)-dihydro-hydroxyphenylpyruvate (ex-H2HPP), adding a pro-S hydride equivalent to C4 position to yield tetrahydro-hydroxyphenylpyruvate (H4HPP). Although the 3Z,7R-ex-H2HPP isomer is kinetically disfavored by BacB and produced in a smaller quantity than 3E,7R-ex-H2HPP, it is the preferred substrate for the conjugate reduction reaction of BacG. The protein is NADPH-dependent reductase BacG of Bacillus subtilis (strain 168).